A 307-amino-acid chain; its full sequence is PCP degradation transcriptional activation protein (307 aa).

Positions 6–63 constitute an HTH lysR-type domain; sequence LPLGHLMVFDALYRHGSAGKAAHALSMPQPTLSRWLAQLRTHFDDPLFVRTRSGMEPT. A DNA-binding region (H-T-H motif) is located at residues 23-42; that stretch reads AGKAAHALSMPQPTLSRWLA.

The protein belongs to the LysR transcriptional regulatory family.

Transcriptional activator for the pcpA, pcpB and pcpE genes for pentachlorophenol (PCP) degradation. Essential for PCP degradation. This is PCP degradation transcriptional activation protein (pcpR) from Sphingobium chlorophenolicum.